Here is a 312-residue protein sequence, read N- to C-terminus: Methionyl-tRNA formyltransferase (312 aa).

A (6S)-5,6,7,8-tetrahydrofolate-binding site is contributed by 113-116; sequence SLLP.

This sequence belongs to the Fmt family.

The enzyme catalyses L-methionyl-tRNA(fMet) + (6R)-10-formyltetrahydrofolate = N-formyl-L-methionyl-tRNA(fMet) + (6S)-5,6,7,8-tetrahydrofolate + H(+). In terms of biological role, attaches a formyl group to the free amino group of methionyl-tRNA(fMet). The formyl group appears to play a dual role in the initiator identity of N-formylmethionyl-tRNA by promoting its recognition by IF2 and preventing the misappropriation of this tRNA by the elongation apparatus. In Francisella philomiragia subsp. philomiragia (strain ATCC 25017 / CCUG 19701 / FSC 153 / O#319-036), this protein is Methionyl-tRNA formyltransferase.